The primary structure comprises 128 residues: uncharacterized protein (128 aa).

This is an uncharacterized protein from Archaeoglobus fulgidus (strain ATCC 49558 / DSM 4304 / JCM 9628 / NBRC 100126 / VC-16).